The following is a 796-amino-acid chain: Probable phosphoketolase (796 aa).

The protein belongs to the XFP family. It depends on thiamine diphosphate as a cofactor.

This is Probable phosphoketolase from Clostridium acetobutylicum (strain ATCC 824 / DSM 792 / JCM 1419 / IAM 19013 / LMG 5710 / NBRC 13948 / NRRL B-527 / VKM B-1787 / 2291 / W).